A 1067-amino-acid chain; its full sequence is Mediator of RNA polymerase II transcription subunit 5 (1067 aa).

This sequence belongs to the Mediator complex subunit 5 family. In terms of assembly, component of the Mediator complex.

The protein localises to the nucleus. Its function is as follows. Component of the Mediator complex, a coactivator involved in the regulated transcription of nearly all RNA polymerase II-dependent genes. Mediator functions as a bridge to convey information from gene-specific regulatory proteins to the basal RNA polymerase II transcription machinery. Mediator is recruited to promoters by direct interactions with regulatory proteins and serves as a scaffold for the assembly of a functional preinitiation complex with RNA polymerase II and the general transcription factors. This chain is Mediator of RNA polymerase II transcription subunit 5 (NUT1), found in Kluyveromyces lactis (strain ATCC 8585 / CBS 2359 / DSM 70799 / NBRC 1267 / NRRL Y-1140 / WM37) (Yeast).